Here is a 118-residue protein sequence, read N- to C-terminus: Large ribosomal subunit protein bL19 (118 aa).

It belongs to the bacterial ribosomal protein bL19 family.

In terms of biological role, this protein is located at the 30S-50S ribosomal subunit interface and may play a role in the structure and function of the aminoacyl-tRNA binding site. This Parafrankia sp. (strain EAN1pec) protein is Large ribosomal subunit protein bL19.